Reading from the N-terminus, the 144-residue chain is Large ribosomal subunit protein uL16 (144 aa).

This sequence belongs to the universal ribosomal protein uL16 family. In terms of assembly, part of the 50S ribosomal subunit.

Functionally, binds 23S rRNA and is also seen to make contacts with the A and possibly P site tRNAs. The protein is Large ribosomal subunit protein uL16 of Lysinibacillus sphaericus (strain C3-41).